A 260-amino-acid polypeptide reads, in one-letter code: Indole-3-glycerol phosphate synthase (260 aa).

It belongs to the TrpC family.

It carries out the reaction 1-(2-carboxyphenylamino)-1-deoxy-D-ribulose 5-phosphate + H(+) = (1S,2R)-1-C-(indol-3-yl)glycerol 3-phosphate + CO2 + H2O. It participates in amino-acid biosynthesis; L-tryptophan biosynthesis; L-tryptophan from chorismate: step 4/5. The sequence is that of Indole-3-glycerol phosphate synthase from Lacticaseibacillus paracasei (strain ATCC 334 / BCRC 17002 / CCUG 31169 / CIP 107868 / KCTC 3260 / NRRL B-441) (Lactobacillus paracasei).